An 86-amino-acid polypeptide reads, in one-letter code: Cytochrome c6 (86 aa).

Heme c is bound by residues Cys14, Cys17, His18, and Met58.

Belongs to the cytochrome c family. PetJ subfamily. In terms of assembly, monomer. In terms of processing, binds 1 heme c group covalently per subunit.

It localises to the plastid. The protein resides in the chloroplast thylakoid lumen. Its function is as follows. Functions as an electron carrier between membrane-bound cytochrome b6-f and photosystem I in oxygenic photosynthesis. This is Cytochrome c6 (petJ) from Alaria esculenta (Irish wakame).